A 407-amino-acid chain; its full sequence is D-galactonate dehydratase family member Pjdr2_1176 (407 aa).

Asp208 serves as a coordination point for Mg(2+). His210 lines the D-arabinonate pocket. Mg(2+)-binding residues include Glu234 and Glu260. The D-arabinonate site is built by Glu260, Arg281, and Glu337.

The protein belongs to the mandelate racemase/muconate lactonizing enzyme family. GalD subfamily.

Has no detectable activity with D-mannonate and with a panel of 70 other acid sugars (in vitro), in spite of the conservation of the residues that are expected to be important for catalytic activity and cofactor binding. May have evolved a divergent function. This chain is D-galactonate dehydratase family member Pjdr2_1176, found in Paenibacillus sp. (strain JDR-2).